A 369-amino-acid polypeptide reads, in one-letter code: tRNA/tmRNA (uracil-C(5))-methyltransferase (369 aa).

S-adenosyl-L-methionine is bound by residues Q193, Y221, N226, E242, and D302. The Nucleophile role is filled by C327. E361 functions as the Proton acceptor in the catalytic mechanism.

It belongs to the class I-like SAM-binding methyltransferase superfamily. RNA M5U methyltransferase family. TrmA subfamily.

It carries out the reaction uridine(54) in tRNA + S-adenosyl-L-methionine = 5-methyluridine(54) in tRNA + S-adenosyl-L-homocysteine + H(+). The enzyme catalyses uridine(341) in tmRNA + S-adenosyl-L-methionine = 5-methyluridine(341) in tmRNA + S-adenosyl-L-homocysteine + H(+). In terms of biological role, dual-specificity methyltransferase that catalyzes the formation of 5-methyluridine at position 54 (m5U54) in all tRNAs, and that of position 341 (m5U341) in tmRNA (transfer-mRNA). The chain is tRNA/tmRNA (uracil-C(5))-methyltransferase from Sulfurimonas denitrificans (strain ATCC 33889 / DSM 1251) (Thiomicrospira denitrificans (strain ATCC 33889 / DSM 1251)).